The chain runs to 290 residues: MIDLSTRWPSPAKLNLFLYINGRTENGYHELQTLFQFVDHGDELTIQANDSGEITISPEIEGVPLKDNLIWKAATALQRFANCSYGAHIDLHKILPMGGGIGGGSSNAATALVALNYLWQTNLSDDELAEIGLALGADVPVFVRGFSAFAEGVGEKLSPAHPDEKWYLVVRPNVSIATADIFGHPDLTRNTPKRDLETLLNTPSVNDCEKIVRMLYPEVDKQLSWLLQYAPSRLTGTGSCVFAEFSSKSEAETILAQLSDKVSAFVAQGRNISPLKETLAEYQSASHRPI.

The active site involves Lys13. Residue 96 to 106 (PMGGGIGGGSS) coordinates ATP. Asp138 is a catalytic residue.

The protein belongs to the GHMP kinase family. IspE subfamily.

The enzyme catalyses 4-CDP-2-C-methyl-D-erythritol + ATP = 4-CDP-2-C-methyl-D-erythritol 2-phosphate + ADP + H(+). The protein operates within isoprenoid biosynthesis; isopentenyl diphosphate biosynthesis via DXP pathway; isopentenyl diphosphate from 1-deoxy-D-xylulose 5-phosphate: step 3/6. In terms of biological role, catalyzes the phosphorylation of the position 2 hydroxy group of 4-diphosphocytidyl-2C-methyl-D-erythritol. The sequence is that of 4-diphosphocytidyl-2-C-methyl-D-erythritol kinase from Vibrio campbellii (strain ATCC BAA-1116).